Here is a 179-residue protein sequence, read N- to C-terminus: Ribulose bisphosphate carboxylase small subunit, chloroplastic 1/4 (179 aa).

Residues 1–58 (MAASSTMLSSVATAACAAPAQASMVAPFVGLKSTSAFPVTQKPATGLSTLPSNGGRVQ) constitute a chloroplast transit peptide.

This sequence belongs to the RuBisCO small chain family. As to quaternary structure, heterohexadecamer of 8 large and 8 small subunits.

The protein localises to the plastid. It localises to the chloroplast. RuBisCO catalyzes two reactions: the carboxylation of D-ribulose 1,5-bisphosphate, the primary event in carbon dioxide fixation, as well as the oxidative fragmentation of the pentose substrate. Both reactions occur simultaneously and in competition at the same active site. Although the small subunit is not catalytic it is essential for maximal activity. This Fritillaria agrestis (Stinkbells) protein is Ribulose bisphosphate carboxylase small subunit, chloroplastic 1/4 (RBCS1).